The chain runs to 278 residues: Digeranylgeranylglyceryl phosphate synthase (278 aa).

The next 8 membrane-spanning stretches (helical) occupy residues 12-32 (LKNCLTASFGAFIGGLIASYF), 34-54 (LATVYDLILASIVVFLVCGFG), 91-111 (LLVFVGLFISLFNMACFLMAV), 129-149 (IIGNLIVAYLTGSVFIFGGIA), 153-173 (IDVTIMLFLCALFAMWSREII), 204-224 (FLLVFAVFLSPLPYLFGFFGI), 225-245 (YYMLSVVFCDLLFLIGIYNLV), and 257-277 (SRNIKIVTNLVLIAFLIGSLF).

It belongs to the UbiA prenyltransferase family. DGGGP synthase subfamily. It depends on Mg(2+) as a cofactor.

Its subcellular location is the cell membrane. It catalyses the reaction sn-3-O-(geranylgeranyl)glycerol 1-phosphate + (2E,6E,10E)-geranylgeranyl diphosphate = 2,3-bis-O-(geranylgeranyl)-sn-glycerol 1-phosphate + diphosphate. It participates in membrane lipid metabolism; glycerophospholipid metabolism. In terms of biological role, prenyltransferase that catalyzes the transfer of the geranylgeranyl moiety of geranylgeranyl diphosphate (GGPP) to the C2 hydroxyl of (S)-3-O-geranylgeranylglyceryl phosphate (GGGP). This reaction is the second ether-bond-formation step in the biosynthesis of archaeal membrane lipids. The protein is Digeranylgeranylglyceryl phosphate synthase of Methanococcus maripaludis (strain C7 / ATCC BAA-1331).